A 112-amino-acid polypeptide reads, in one-letter code: DNA-binding protein TSIB_0525 (112 aa).

The protein belongs to the PDCD5 family.

The protein is DNA-binding protein TSIB_0525 of Thermococcus sibiricus (strain DSM 12597 / MM 739).